We begin with the raw amino-acid sequence, 386 residues long: Chorismate synthase (386 aa).

The segment at leucine 32–arginine 60 is disordered. Residues aspartate 38–arginine 47 are compositionally biased toward basic and acidic residues. An NADP(+)-binding site is contributed by arginine 46. FMN-binding positions include arginine 123 to serine 125, glycine 290, lysine 305 to serine 309, and arginine 332.

This sequence belongs to the chorismate synthase family. It depends on FMNH2 as a cofactor.

The enzyme catalyses 5-O-(1-carboxyvinyl)-3-phosphoshikimate = chorismate + phosphate. It participates in metabolic intermediate biosynthesis; chorismate biosynthesis; chorismate from D-erythrose 4-phosphate and phosphoenolpyruvate: step 7/7. Its function is as follows. Catalyzes the anti-1,4-elimination of the C-3 phosphate and the C-6 proR hydrogen from 5-enolpyruvylshikimate-3-phosphate (EPSP) to yield chorismate, which is the branch point compound that serves as the starting substrate for the three terminal pathways of aromatic amino acid biosynthesis. This reaction introduces a second double bond into the aromatic ring system. This is Chorismate synthase from Methanopyrus kandleri (strain AV19 / DSM 6324 / JCM 9639 / NBRC 100938).